Here is a 526-residue protein sequence, read N- to C-terminus: Alpha-1,3-mannosyl-glycoprotein 4-beta-N-acetylglucosaminyltransferase A (526 aa).

Residues 1–6 are Cytoplasmic-facing; the sequence is MRLRNG. Residues 7–27 form a helical; Signal-anchor for type II membrane protein membrane-spanning segment; the sequence is TVATALVFVTSFLTLSWYTTW. Residues 28–63 are a coiled coil; sequence QNGKEKLIAYQREFLALKERLRVAEHRISQRSSELN. The Lumenal portion of the chain corresponds to 28 to 526; sequence QNGKEKLIAY…NEIHIKKVTS (499 aa). Residue Asn-449 is glycosylated (N-linked (GlcNAc...) asparagine). Position 465 is a phosphoserine (Ser-465).

The protein belongs to the glycosyltransferase 54 family. A divalent metal cation is required as a cofactor. In terms of processing, N-glycosylated.

The protein resides in the golgi apparatus membrane. It is found in the secreted. It catalyses the reaction N(4)-{beta-D-GlcNAc-(1-&gt;2)-alpha-D-Man-(1-&gt;3)-[beta-D-GlcNAc-(1-&gt;2)-alpha-D-Man-(1-&gt;6)]-beta-D-Man-(1-&gt;4)-beta-D-GlcNAc-(1-&gt;4)-beta-D-GlcNAc}-L-asparaginyl-[protein] + UDP-N-acetyl-alpha-D-glucosamine = N(4)-{beta-D-GlcNAc-(1-&gt;2)-[beta-D-GlcNAc-(1-&gt;4)]-alpha-D-Man-(1-&gt;3)-[beta-D-GlcNAc-(1-&gt;2)-alpha-D-Man-(1-&gt;6)]-beta-D-Man-(1-&gt;4)-beta-D-GlcNAc-(1-&gt;4)-beta-D-GlcNAc}-L-asparaginyl-[protein] + UDP + H(+). It carries out the reaction an N(4)-{beta-D-GlcNAc-(1-&gt;2)-alpha-D-Man-(1-&gt;3)-[alpha-D-Man-(1-&gt;6)]-beta-D-Man-(1-&gt;4)-beta-D-GlcNAc-(1-&gt;4)-beta-D-GlcNAc}-L-asparaginyl-[protein] + UDP-N-acetyl-alpha-D-glucosamine = an N(4)-{beta-D-GlcNAc-(1-&gt;2)-[beta-D-GlcNAc-(1-&gt;4)]-alpha-D-Man-(1-&gt;3)-[alpha-D-Man-(1-&gt;6)]-beta-D-Man-(1-&gt;4)-beta-D-GlcNAc-(1-&gt;4)-beta-D-GlcNAc}-L-asparaginyl-[protein] + UDP + H(+). The enzyme catalyses an N(4)-{beta-D-GlcNAc-(1-&gt;2)-alpha-D-Man-(1-&gt;3)-[beta-D-GlcNAc-(1-&gt;2)-[beta-D-GlcNAc-(1-&gt;6)]-alpha-D-Man-(1-&gt;6)]-beta-D-Man-(1-&gt;4)-beta-D-GlcNAc-(1-&gt;4)-beta-D-GlcNAc}-L-asparaginyl-[protein] + UDP-N-acetyl-alpha-D-glucosamine = an N(4)-{beta-D-GlcNAc-(1-&gt;2)-[beta-D-GlcNAc-(1-&gt;4)]-alpha-D-Man-(1-&gt;3)-[beta-D-GlcNAc-(1-&gt;2)-[beta-D-GlcNAc-(1-&gt;6)]-alpha-D-Man-(1-&gt;6)]-beta-D-Man-(1-&gt;4)-beta-D-GlcNAc-(1-&gt;4)-beta-D-GlcNAc}-L-asparaginyl-[protein] + UDP + H(+). The catalysed reaction is an N(4)-{beta-D-GlcNAc-(1-&gt;2)-alpha-D-Man-(1-&gt;3)-[beta-D-GlcNAc-(1-&gt;2)-alpha-D-Man-(1-&gt;6)]-beta-D-Man-(1-&gt;4)-beta-D-GlcNAc-(1-&gt;4)-[alpha-L-Fuc-(1-&gt;6)]-beta-D-GlcNAc}-L-asparaginyl-[protein] + UDP-N-acetyl-alpha-D-glucosamine = N(4)-{beta-D-GlcNAc-(1-&gt;2)-[beta-D-GlcNAc-(1-&gt;4)]-alpha-D-Man-(1-&gt;3)-[beta-D-GlcNAc-(1-&gt;2)-alpha-D-Man-(1-&gt;6)]-beta-D-Man-(1-&gt;4)-beta-D-GlcNAc-(1-&gt;4)-[alpha-L-Fuc-(1-&gt;6)]-beta-D-GlcNAc}-asparaginyl-[protein] + UDP + H(+). It catalyses the reaction an N(4)-{beta-D-GlcNAc-(1-&gt;2)-alpha-D-Man-(1-&gt;3)-[beta-D-Gal-(1-&gt;4)-beta-D-GlcNAc-(1-&gt;2)-alpha-D-Man-(1-&gt;6)]-beta-D-Man-(1-&gt;4)-beta-D-GlcNAc-(1-&gt;4)-beta-D-GlcNAc}-L-asparaginyl-[protein] + UDP-N-acetyl-alpha-D-glucosamine = an N(4)-{beta-D-GlcNAc-(1-&gt;2)-[beta-D-GlcNAc-(1-&gt;4)]-alpha-D-Man-(1-&gt;3)-[beta-D-Gal-(1-&gt;4)-beta-D-GlcNAc-(1-&gt;2)-alpha-D-Man-(1-&gt;6)]-beta-D-Man-(1-&gt;4)-beta-D-GlcNAc-(1-&gt;4)-beta-D-GlcNAc}-L-asparaginyl-[protein] + UDP + H(+). It carries out the reaction N(4)-{beta-D-GlcNAc-(1-&gt;2)-alpha-D-Man-(1-&gt;3)-[alpha-D-Man-(1-&gt;3)-{alpha-D-Man-(1-&gt;6)}-alpha-D-Man-(1-&gt;6)]-beta-D-Man-(1-&gt;4)-beta-D-GlcNAc-(1-&gt;4)-beta-D-GlcNAc}-asparaginyl-[protein] + UDP-N-acetyl-alpha-D-glucosamine = N(4)-{beta-D-GlcNAc-(1-&gt;2)-[beta-D-GlcNAc-(1-&gt;4)]-alpha-D-Man-(1-&gt;3)-[alpha-D-Man-(1-&gt;3)-{alpha-D-Man-(1-&gt;6)}-alpha-D-Man-(1-&gt;6)]-beta-D-Man-(1-&gt;4)-beta-D-GlcNAc-(1-&gt;4)-beta-D-GlcNAc}-asparaginyl-[protein] + UDP + H(+). The enzyme catalyses N(4)-{beta-D-GlcNAc-(1-&gt;2)-alpha-D-Man-(1-&gt;3)-beta-D-Man-(1-&gt;4)-beta-D-GlcNAc-(1-&gt;4)-beta-D-GlcNAc}-asparaginyl-[protein] + UDP-N-acetyl-alpha-D-glucosamine = N(4)-{beta-D-GlcNAc-(1-&gt;2)-[beta-D-GlcNAc-(1-&gt;4)]-alpha-D-Man-(1-&gt;3)-beta-D-Man-(1-&gt;4)-beta-D-GlcNAc-(1-&gt;4)-beta-D-GlcNAc}-asparaginyl-[protein] + UDP + H(+). It functions in the pathway protein modification; protein glycosylation. Its activity is regulated as follows. Inhibited by UDP. Glycosyltransferase that catalyze the transfer of GlcNAc from UDP-GlcNAc to the GlcNAcbeta1-2Manalpha1-3 arm of the core structure of N-linked glycans through a beta1-4 linkage and participates in the production of tri- and tetra-antennary N-linked sugar chains. Involved in glucose transport by mediating SLC2A2/GLUT2 glycosylation, thereby controlling cell-surface expression of SLC2A2 in pancreatic beta cells. This Rattus norvegicus (Rat) protein is Alpha-1,3-mannosyl-glycoprotein 4-beta-N-acetylglucosaminyltransferase A.